A 487-amino-acid polypeptide reads, in one-letter code: Protein nucleotidyltransferase YdiU (487 aa).

Glycine 90, glycine 92, arginine 93, lysine 113, aspartate 125, glycine 126, arginine 176, and arginine 183 together coordinate ATP. Aspartate 252 acts as the Proton acceptor in catalysis. Asparagine 253 and aspartate 262 together coordinate Mg(2+). An ATP-binding site is contributed by aspartate 262.

This sequence belongs to the SELO family. The cofactor is Mg(2+). Requires Mn(2+) as cofactor.

The enzyme catalyses L-seryl-[protein] + ATP = 3-O-(5'-adenylyl)-L-seryl-[protein] + diphosphate. It carries out the reaction L-threonyl-[protein] + ATP = 3-O-(5'-adenylyl)-L-threonyl-[protein] + diphosphate. It catalyses the reaction L-tyrosyl-[protein] + ATP = O-(5'-adenylyl)-L-tyrosyl-[protein] + diphosphate. The catalysed reaction is L-histidyl-[protein] + UTP = N(tele)-(5'-uridylyl)-L-histidyl-[protein] + diphosphate. The enzyme catalyses L-seryl-[protein] + UTP = O-(5'-uridylyl)-L-seryl-[protein] + diphosphate. It carries out the reaction L-tyrosyl-[protein] + UTP = O-(5'-uridylyl)-L-tyrosyl-[protein] + diphosphate. In terms of biological role, nucleotidyltransferase involved in the post-translational modification of proteins. It can catalyze the addition of adenosine monophosphate (AMP) or uridine monophosphate (UMP) to a protein, resulting in modifications known as AMPylation and UMPylation. The protein is Protein nucleotidyltransferase YdiU of Pseudomonas fluorescens (strain ATCC BAA-477 / NRRL B-23932 / Pf-5).